The following is a 312-amino-acid chain: Ribosomal protein L11 methyltransferase (312 aa).

The S-adenosyl-L-methionine site is built by Thr162, Gly183, Asp205, and Asn248.

The protein belongs to the methyltransferase superfamily. PrmA family.

It localises to the cytoplasm. The enzyme catalyses L-lysyl-[protein] + 3 S-adenosyl-L-methionine = N(6),N(6),N(6)-trimethyl-L-lysyl-[protein] + 3 S-adenosyl-L-homocysteine + 3 H(+). In terms of biological role, methylates ribosomal protein L11. The chain is Ribosomal protein L11 methyltransferase from Geobacillus kaustophilus (strain HTA426).